The primary structure comprises 192 residues: HTH-type transcriptional regulator Hpr (192 aa).

The 145-residue stretch at 12–156 (SIIFSHKFAQ…LLSIVRHVYG (145 aa)) folds into the HTH marR-type domain. Positions 62–85 (ISDIAKFGVMHVSTAFNFSKKLEE) form a DNA-binding region, H-T-H motif.

As to quaternary structure, homodimer.

Functionally, negative regulator of protease production and sporulation. The polypeptide is HTH-type transcriptional regulator Hpr (Halalkalibacterium halodurans (strain ATCC BAA-125 / DSM 18197 / FERM 7344 / JCM 9153 / C-125) (Bacillus halodurans)).